Consider the following 183-residue polypeptide: Peptidyl-tRNA hydrolase (183 aa).

Tyrosine 14 lines the tRNA pocket. Histidine 19 functions as the Proton acceptor in the catalytic mechanism. Residues tyrosine 55 and asparagine 57 each contribute to the tRNA site.

This sequence belongs to the PTH family. Monomer.

It localises to the cytoplasm. The catalysed reaction is an N-acyl-L-alpha-aminoacyl-tRNA + H2O = an N-acyl-L-amino acid + a tRNA + H(+). Hydrolyzes ribosome-free peptidyl-tRNAs (with 1 or more amino acids incorporated), which drop off the ribosome during protein synthesis, or as a result of ribosome stalling. Its function is as follows. Catalyzes the release of premature peptidyl moieties from peptidyl-tRNA molecules trapped in stalled 50S ribosomal subunits, and thus maintains levels of free tRNAs and 50S ribosomes. This Thermus thermophilus (strain ATCC BAA-163 / DSM 7039 / HB27) protein is Peptidyl-tRNA hydrolase.